We begin with the raw amino-acid sequence, 1179 residues long: MEIMNNQNQCVPYNCLNDPTIEILEGERIETGYTPIDISLSLTQFLLSEFVPGAGFVLGLIDLIWGFVGPSQWDAFLVQIEQLINQRIEEFARNQAISRLEGLSNLYQIYAEAFREWEADPTNPALTEEMRIQFNDMNSALTTAIPLFTVQNYQVPLLSVYVQAANLHLSVLRDVSVFGQRWGFDVATINSRYNDLTRLIGTYTDYAVRWYNTGLERVWGPDSRDWVRYNQFRRELTLTVLDIVSLFPNYDSRTYPIRTVSQLTREIYTNPVLENFDGSFRGMAQRIEQNIRQPHLMDLLNSITIYTDVHRGFNYWSGHQITASPVGFAGPEFTFPRYGTMGNAAPPVLISTTGLGIFRTLSSPLYRRIILGSGPNNQNLFVLDGTEFSFASLTADLPSTIYRQRGTVDSLDVIPPQDNSVPARAGFSHRLSHVTMLSQAAGAVYTLRAPTFSWRHRSAEFSNLIPSSQITQIPLTKSINLGSGTSVVKGPGFTGGDILRITSPGQISTLRVTITAPLSQRYRVRIRYASTTNLQFHTSIDGRPINQGNFSATMSSGGNLQSGSFRTAGFTTPFNFSNGSSIFTLSAHVFNSGNEVYIERIEFVPAEVTFEAEYDLERAQEAVNALFTSSNQLGLKTNVTDYHIDQVSNLVECLSGEFCLDEKRELSEKVKHANRLSDERNLLQDPNFRGINRQPDRGWRGSTDITIQGGDDVFKENYVTLPGTFNECYPTYLYQKIDESKLKAYTRYQLRGYIEDSQHLEIYLIRYNTKHETVNVPGTGSLWPLSVENPIGKCGEPNRCAPQLEWNPDLDCSCRDGEKCAHHSHHFSLDIDIGCTDLNENLGVWVIFKIKMQDGHARLGNLEFLEEKPLVGESLARVKRAEKKWRDKREKLQVETNIVYKEAKESVDALFVNSQYDRLQADTDIAMIHAADKRVHRIREAYLPELSVIPGVNAGIFEELEGRIFTAYSLYDARNVIKNGDFNNGLSCWNVKGHVDVEEQNNHRSVLVVPEWEAEVSQEVRVCPGRGYILRVTAYKEGYGEGCVTIHEIEDNTDELKFSNCVEEEVYPNNTVTCNDYTANQEEYGGAYTSRNRGYGESYESNSSIPAEYAPVYEEAYIDGRKENPCESNRGYGDYTPLPAGYVTKELEYFPETDKVWIEIGETEGTFIVDSVELLLMEE.

It belongs to the delta endotoxin family.

Functionally, promotes colloidosmotic lysis by binding to the midgut epithelial cells of many lepidopteran larvae. The sequence is that of Pesticidal crystal protein Cry1Ad (cry1Ad) from Bacillus thuringiensis subsp. aizawai.